An 87-amino-acid chain; its full sequence is Exodeoxyribonuclease 7 small subunit (87 aa).

The protein belongs to the XseB family. As to quaternary structure, heterooligomer composed of large and small subunits.

Its subcellular location is the cytoplasm. It carries out the reaction Exonucleolytic cleavage in either 5'- to 3'- or 3'- to 5'-direction to yield nucleoside 5'-phosphates.. Functionally, bidirectionally degrades single-stranded DNA into large acid-insoluble oligonucleotides, which are then degraded further into small acid-soluble oligonucleotides. In Solidesulfovibrio magneticus (strain ATCC 700980 / DSM 13731 / RS-1) (Desulfovibrio magneticus), this protein is Exodeoxyribonuclease 7 small subunit.